The sequence spans 739 residues: Catalase-peroxidase (739 aa).

Positions 1-20 are disordered; that stretch reads MGSNECPYSRQNANIGGGGQ. The segment at residues 94–217 is a cross-link (tryptophyl-tyrosyl-methioninium (Trp-Tyr) (with M-243)); the sequence is WHSAGTYRVF…LAASHMGLIY (124 aa). Histidine 95 acts as the Proton acceptor in catalysis. The segment at residues 217 to 243 is a cross-link (tryptophyl-tyrosyl-methioninium (Tyr-Met) (with W-94)); sequence YVNPEGPNKNPDPVLAAKDIRITFGRM. Heme b is bound at residue histidine 258.

It belongs to the peroxidase family. Peroxidase/catalase subfamily. Homodimer or homotetramer. Heme b is required as a cofactor. In terms of processing, formation of the three residue Trp-Tyr-Met cross-link is important for the catalase, but not the peroxidase activity of the enzyme.

Its subcellular location is the cytoplasm. It carries out the reaction H2O2 + AH2 = A + 2 H2O. It catalyses the reaction 2 H2O2 = O2 + 2 H2O. Functionally, bifunctional enzyme with both catalase and broad-spectrum peroxidase activity. The polypeptide is Catalase-peroxidase (Emericella nidulans (strain FGSC A4 / ATCC 38163 / CBS 112.46 / NRRL 194 / M139) (Aspergillus nidulans)).